The primary structure comprises 452 residues: Phosphoglucosamine mutase (452 aa).

The active-site Phosphoserine intermediate is Ser-104. Mg(2+) contacts are provided by Ser-104, Asp-246, Asp-248, and Asp-250. Residue Ser-104 is modified to Phosphoserine.

Belongs to the phosphohexose mutase family. Mg(2+) serves as cofactor. Post-translationally, activated by phosphorylation.

It carries out the reaction alpha-D-glucosamine 1-phosphate = D-glucosamine 6-phosphate. Its function is as follows. Catalyzes the conversion of glucosamine-6-phosphate to glucosamine-1-phosphate. This Streptomyces griseus subsp. griseus (strain JCM 4626 / CBS 651.72 / NBRC 13350 / KCC S-0626 / ISP 5235) protein is Phosphoglucosamine mutase.